Consider the following 4776-residue polypeptide: Pneumococcal serine-rich repeat protein (4776 aa).

Residues 1-72 (MTETVEDKVS…VVLGTISTSN (72 aa)) form the signal peptide. Ser73, Ser75, Ser76, Ser78, Ser80, Ser82, Ser94, Ser100, Ser108, Ser110, Ser118, Ser120, and Ser121 each carry an O-linked (GlcNAc...) serine glycan. The tract at residues 73-121 (SASSTSLSASESASTSASESASTSASTSASTSASESASTSASTSISASS) is serine-rich repeat region 1, SRR1. The interval 86–112 (STSASESASTSASTSASTSASESASTS) is disordered. The tract at residues 122–166 (TVVGSQTAAATEATAKKVEEDRKKPASDYVASVTNVNLQSYAKRR) is self aggregating domain. The tract at residues 122–394 (TVVGSQTAAA…QSKSLSVSAS (273 aa)) is basic region, BR. Residues 164 to 168 (KRRKR) carry the Host furin cleavage recognition motif. The keratin 10-binding domain, cell-type specific binding to lung-derived cells stretch occupies residues 273–341 (TQTMLTLGSD…GYGLTSSWTV (69 aa)). A serine-rich repeat region 2, SRR2 region spans residues 395 to 4712 (QSASASASTS…ASTSASASAS (4318 aa)). Disordered regions lie at residues 481–627 (ASTS…STSA), 861–889 (ASAS…SAST), 925–965 (ASAS…SASA), 1052–1085 (SAST…SASA), 1123–1153 (ASAS…STSA), 1171–1199 (ASAS…STSA), 1311–1357 (ASES…SAST), 1671–1731 (ASES…SESA), 1792–1863 (SASE…STSA), 2105–2133 (ASAS…SAST), 2169–2209 (ASAS…SASA), 2296–2329 (SAST…SASA), 2367–2397 (ASAS…STSA), 2415–2443 (ASAS…STSA), 2571–2631 (ASES…SESA), 2737–2805 (ESAS…STSA), 2855–3113 (ASAS…STSA), 3347–3375 (ASAS…SAST), 3411–3451 (ASAS…SASA), 3538–3571 (SAST…SASA), 3609–3639 (ASAS…STSA), 3657–3685 (ASAS…STSA), 3797–3843 (ASES…SAST), 4167–4197 (ASAS…STSA), 4215–4243 (ASAS…STSA), 4355–4401 (ASES…SAST), and 4706–4747 (SASA…GTES). Polar residues predominate over residues 4715-4747 (VSNSANHSNSQVGNTSGSTGKSQKELPNTGTES). An LPXTG sorting signal motif is present at residues 4740-4744 (LPNTG). Position 4743 is a pentaglycyl murein peptidoglycan amidated threonine (Thr4743). Residues 4744-4776 (GTESSIGSVLLGVLAAVTGIGLVAKRRKRDEEE) constitute a propeptide, removed by sortase.

It belongs to the serine-rich repeat protein (SRRP) family. In terms of assembly, binds to human and mouse protein keratin 10 (KRT10). Post-translationally, glycosylated. Only truncated substrates greater than 25 residues long are glycosylated by the Gtf1-Gtf2 complex in vitro; only Ser residues have been seen to be glycosylated. Based on electrophoretic mobility it is probable that most of the Ser residues in SSR1 and SSR2 are O-GlcNAcylated. Subsequent glycosylation by up to 7 sugar transferases (Gtf3 and GlyAT, GlyB, GlyD, GlyE, GlyF and GlyG) is able to generate very high sugar polymorphism. Can be cleaved by human furin protease; this fragment contributes to self-aggregation and possibly biofilm formation in vitro.

The protein resides in the secreted. It is found in the cell wall. Its subcellular location is the cell surface. Functionally, protein that allows bacteria to adhere to mammalian host cells. Required for full virulence in mouse infection models when infected intranasally. Required for adhesion to host cells in vitro and for persistence in the lower respiratory tract. Binds host keratin 10 (KRT10) on lung cells which mediates adhesion via the C-terminus of the basic region (BR, residues 273-341); glycosylation of either protein is not required for the interaction. A region in the N-terminus (residues 122-166) self aggregates, contributing to mature biofilm formation. The basic region (BR, residues 187-385) also self aggregates; the BR binds DNA which enhances self aggregation. The chain is Pneumococcal serine-rich repeat protein from Streptococcus pneumoniae serotype 4 (strain ATCC BAA-334 / TIGR4).